A 207-amino-acid polypeptide reads, in one-letter code: MPVVRSKICGITRVEDALIAAKAGADAIGLVFYGKSPRAVSLQRAREIVAALPPFVTTVGLFVNASRCEINEILDAVPLDMLQFHGDESPAQCEGFHRPWYKALRVGGGEDIAAQVALYANASGVLLDTFVAGVPGGTGECFDWSLIPPNLSKPLILAGGLTADNVEQAIAQVRPYAVDISGGVEASKGIKDAVKVETFVRRVRSVM.

Belongs to the TrpF family.

It catalyses the reaction N-(5-phospho-beta-D-ribosyl)anthranilate = 1-(2-carboxyphenylamino)-1-deoxy-D-ribulose 5-phosphate. It participates in amino-acid biosynthesis; L-tryptophan biosynthesis; L-tryptophan from chorismate: step 3/5. This Stutzerimonas stutzeri (strain A1501) (Pseudomonas stutzeri) protein is N-(5'-phosphoribosyl)anthranilate isomerase.